The chain runs to 410 residues: MFRLRDFEYYNRTVFLRVDLNSPMSNGKIISDARFRAVLPTIKYLIESGAKVVVGTHQGKPYSEEYSTTEEHARILSELLNMHVEYVEDIFGKYARERIKAMKPGEVIVLENLRFSAEEVKNATIEECEKTFFVRKLSQVIDLVVNDAFAAAHRSQPSLVGFARIKPMIMGFLMEKEVDALTKAYESEEKPRVYVLGGAKVDDSLKVAENVLRKEKADLILTGGLVGQLFTLAKGFDLGRENIKFLEKKGILKYVDWAEKILDEFYPYVRTPVDFAIDFKGERVEIDLLSDEKRLFDEYPILDIGSRTVEKYREILLKARIIVANGPMGVFEREEFAVGTIGVFKAIGESPAFSVIGGGHSIASIYKYNITGISHISTGGGAMLTFFAGEKLPVLEALKISYEKFSNLLS.

Substrate is bound by residues 19 to 21 (DLN), R34, 57 to 60 (HQGK), R114, and R154. ATP contacts are provided by residues E332 and 358–361 (GGHS).

This sequence belongs to the phosphoglycerate kinase family. As to quaternary structure, homodimer.

It localises to the cytoplasm. The catalysed reaction is (2R)-3-phosphoglycerate + ATP = (2R)-3-phospho-glyceroyl phosphate + ADP. It functions in the pathway carbohydrate degradation; glycolysis; pyruvate from D-glyceraldehyde 3-phosphate: step 2/5. The chain is Phosphoglycerate kinase (pgk) from Pyrococcus furiosus (strain ATCC 43587 / DSM 3638 / JCM 8422 / Vc1).